A 297-amino-acid chain; its full sequence is Formylmethanofuran--tetrahydromethanopterin formyltransferase-like protein (297 aa).

The protein belongs to the FTR family.

The protein is Formylmethanofuran--tetrahydromethanopterin formyltransferase-like protein (ehaS) of Methanothermobacter thermautotrophicus (strain ATCC 29096 / DSM 1053 / JCM 10044 / NBRC 100330 / Delta H) (Methanobacterium thermoautotrophicum).